We begin with the raw amino-acid sequence, 176 residues long: R-phycoerythrin beta chain (176 aa).

Residues Cys50 and Cys61 each contribute to the phycourobilin site. Asn72 is subject to N4-methylasparagine. (2R,3E)-phycoerythrobilin-binding residues include Cys82 and Cys158.

This sequence belongs to the phycobiliprotein family. As to quaternary structure, heterodimer of an alpha and a beta chain. Contains two covalently linked phycoerythrobilin chromophores and one covalently linked phycourobilin chromophore.

The protein resides in the plastid. The protein localises to the chloroplast thylakoid membrane. In terms of biological role, light-harvesting photosynthetic bile pigment-protein from the phycobiliprotein complex. This Aglaothamnion neglectum (Red alga) protein is R-phycoerythrin beta chain (cpeB).